A 125-amino-acid chain; its full sequence is uncharacterized protein (125 aa).

Transmembrane regions (helical) follow at residues 28–48 and 54–74; these read VFITHLFFLLHSLLLFLSQFC and FFLPTINLVTHSIKFITLFFF.

The protein localises to the membrane. This is an uncharacterized protein from Saccharomyces cerevisiae (strain ATCC 204508 / S288c) (Baker's yeast).